Reading from the N-terminus, the 809-residue chain is 3',5'-cyclic-AMP phosphodiesterase 4D (809 aa).

The segment at 1 to 107 (MEAEGSSAPA…SGATGRVRHR (107 aa)) is disordered. Residues His-54, Pro-59, and Pro-63 each carry the phosphoserine modification. Over residues 58–89 (PPPPPPSPQPQPQCPLQPPPPPPLPPPPPPPG) the composition is skewed to pro residues. The segment covering 90-102 (AARGRYASSGATG) has biased composition (low complexity). Phosphoserine is present on residues Ser-142, Ser-299, Ser-301, Ser-348, and Ser-375. Residues 343-364 (EVEIPSPTQKEKEKKKRPMSQI) form a disordered region. One can recognise a PDEase domain in the interval 386–715 (VKTEQEDVLA…EWYQSTIPQS (330 aa)). Lys-387 participates in a covalent cross-link: Glycyl lysine isopeptide (Lys-Gly) (interchain with G-Cter in SUMO). His-462 acts as the Proton donor in catalysis. Residue His-462 participates in 3',5'-cyclic AMP binding. His-462 lines the AMP pocket. Positions 466, 502, 503, and 620 each coordinate Zn(2+). AMP is bound by residues Asp-503, Asp-620, Asn-623, Gln-671, and Phe-674. Asp-503 contributes to the Mg(2+) binding site. Asp-503 provides a ligand contact to Mn(2+). 3',5'-cyclic AMP is bound by residues Gln-671 and Phe-674. Disordered regions lie at residues 710-729 (STIP…GRQG) and 739-809 (TLEE…SPDT). A compositionally biased stretch (polar residues) spans 762–773 (CSDSKTLCTQDS). The span at 779–796 (PLDEQVEEEAVGEEEESQ) shows a compositional bias: acidic residues.

The protein belongs to the cyclic nucleotide phosphodiesterase family. PDE4 subfamily. In terms of assembly, homodimer for the long isoforms. Isoforms with truncated N-termini are monomeric. Isoform 3 is part of a ternary complex containing PRKAR2A, PRKAR2B and AKAP9. Interacts with PDE4DIP. Identified in a complex composed of RYR1, PDE4D, PKA, FKBP1A and protein phosphatase 1 (PP1). Isoform 5, isoform N3 and isoform 12 bind RACK1 via their unique N-terminus. Binds ARRB2. Interacts (via N-terminal region) with SHANK2 (via proline-rich region); the interaction is increased in a PKA-dependent manner. Requires Zn(2+) as cofactor. Mg(2+) serves as cofactor. It depends on Mn(2+) as a cofactor. Post-translationally, long isoforms that share a conserved PKA phosphorylation site in the N-terminus are activated by PKA through phosphorylation. Isoform 3 and isoform 7 are activated by phosphorylation (in vitro), but not isoform 6. Isoform N3 and isoform 12 are phosphorylated on Ser-49, Ser-51, Ser-55 and Ser-59. In terms of processing, sumoylation of long isoforms by PIAS4 augments their activation by PKA phosphorylation and represses their inhibition by ERK phosphorylation. Expressed in colonic epithelial cells (at protein level). Widespread; most abundant in skeletal muscle. In terms of tissue distribution, detected in brain. As to expression, detected in brain, placenta, lung and kidney. Detected in heart and skeletal muscle.

It is found in the apical cell membrane. It localises to the cytoplasm. Its subcellular location is the membrane. The protein localises to the cytoskeleton. The protein resides in the microtubule organizing center. It is found in the centrosome. The enzyme catalyses 3',5'-cyclic AMP + H2O = AMP + H(+). The protein operates within purine metabolism; 3',5'-cyclic AMP degradation; AMP from 3',5'-cyclic AMP: step 1/1. With respect to regulation, inhibited by rolipram. Activated by phosphatidic acid. In terms of biological role, hydrolyzes the second messenger cAMP, which is a key regulator of many important physiological processes. The sequence is that of 3',5'-cyclic-AMP phosphodiesterase 4D from Homo sapiens (Human).